A 129-amino-acid polypeptide reads, in one-letter code: GM1b/asialo-GM1 oligosaccharide-binding R-type lectin (129 aa).

A carbohydrate-binding positions include F21–N23, R26–D28, F32, and Y37–Q40.

In terms of assembly, homodimer. Highest expression in the outer part of the mantle rim. Highly expressed in gills, with a much lower expression in the digestive gland and posterior adductor muscle. Scarcely detectable in foot.

With respect to regulation, hemagglutination activity requires divalent cations such as Ca(2+). Hemagglutination activity is weakly inhibited by monosaccharides such as D-Gal (25 mM), D-GalNAc (25 mM) and D-Fuc (25 mM) and by disaccharides such as melibiose (25 mM) and lactose (25 mM). Hemagglutination activity is inhibited by bovine submaxillary mucin, but not by porcine stomach mucin or fetuin. In terms of biological role, galbeta1-3GalNAcbeta1-4Galbeta1-4Glc oligosaccharide-binding lectin. Binds strongly to the oligosaccharides of ganglioside GM1b and to a lesser extent its precursor asialo-GM1. Binds weakly to asialo-GM2 oligosaccharide and to the glycan moiety of globo-series stage-specific embryonal antigen 4 (SSEA-4) hexaose. Binds galactose, N-acetylgalactose and lactose. Does not bind GM1. Does not bind to Gal-beta1,3-GalNAc (Thomsen-Friedenreich antigen), the oligosaccharide of GM1a ganglioside or SSEA-4 tetraose. Does not bind to N-glycans, O-glycans or glycosaminoglycans of glycoproteins. Does not bind Lewis glycans, derivatives of lactose or N-acetyllactosamine or blood group (ABH-type) oligosaccharides. Does not bind glucose. Has hemagglutination activity towards rabbit erythrocytes. Displays cytotoxic effects against various cultured cell lines including human breast (MCF-7), cervical (HeLa) and colon cancer (Caco2) cell lines, as well as dog kidney (MDCK) cell line that express asialo-GM1 oligosaccharide at their cell surface. Shows dose- and time-dependent activation of MKK3/6, ERK1/2 and p38 MAPK, as well as caspase-3/9 in HeLa cervical cancer cells. No cytotoxic effect on BT474 human breast cancer cell line. May be involved in recognition of glycans found on parasitic or symbiotic microorganisms. The sequence is that of GM1b/asialo-GM1 oligosaccharide-binding R-type lectin from Mytilisepta virgata (Purplish bifurcate mussel).